The chain runs to 307 residues: MAGTSAESEAGQDGMEPVKPLEAELLVVTGMSGAGRSTAADALEDHGWYVVENLPPQMLGTLAELVSHAPQSIPRLAVVIDVRSKGLFADIRAALGALAASGVTFRVLFLDASDNVLVRRFEQGRRPHPLQGGGRILDGIAAERELLQELRDSSDVVLDTSGYNVHGLATAITELFSETGPVALRLNVMSFGFKYGLPVDSNYVADVRFIPNPHWVPQLRPHTGLDKDVSDYVLEAEGVKNFVDRYVMALEPVLDGYRRENKHYATIAVGCTGGKHRSVAVAVELSKKLAQYPRVTVTTTHRDLGRE.

Residue 30 to 37 coordinates ATP; that stretch reads GMSGAGRS. Residue 81–84 coordinates GTP; the sequence is DVRS.

The protein belongs to the RapZ-like family.

Its function is as follows. Displays ATPase and GTPase activities. This is Nucleotide-binding protein Achl_1824 from Pseudarthrobacter chlorophenolicus (strain ATCC 700700 / DSM 12829 / CIP 107037 / JCM 12360 / KCTC 9906 / NCIMB 13794 / A6) (Arthrobacter chlorophenolicus).